Reading from the N-terminus, the 169-residue chain is Major pepsin inhibitor 3 (169 aa).

Positions 1-20 (MHVWLILSLASLWTSSIAYS) are cleaved as a signal peptide. Gln21 carries the post-translational modification Pyrrolidone carboxylic acid. Intrachain disulfides connect Cys33–Cys79, Cys68–Cys86, and Cys99–Cys166. Positions 135-169 (EEQQENQPPSSGMPHGAVPAGGLSPPPPPSFCTVQ) are disordered. Over residues 158-169 (SPPPPPSFCTVQ) the composition is skewed to pro residues.

This sequence belongs to the protease inhibitor I33 family. Body wall.

Its subcellular location is the secreted. In terms of biological role, this is an inhibitor of the aspartic protease pepsin. The sequence is that of Major pepsin inhibitor 3 from Ascaris suum (Pig roundworm).